Reading from the N-terminus, the 270-residue chain is Monofunctional glycosyltransferase (270 aa).

Over residues 1-10 (MKRSQRMNNS) the composition is skewed to polar residues. Residues 1 to 36 (MKRSQRMNNSPERHSQYRNEPHYNTYYQPVGKPPKK) form a disordered region. The span at 11 to 21 (PERHSQYRNEP) shows a compositional bias: basic and acidic residues. The helical transmembrane segment at 42–62 (IFLRLFIIFVFIYALFIGLMY) threads the bilayer.

This sequence belongs to the glycosyltransferase 51 family.

The protein resides in the cell membrane. The catalysed reaction is [GlcNAc-(1-&gt;4)-Mur2Ac(oyl-L-Ala-gamma-D-Glu-L-Lys-D-Ala-D-Ala)](n)-di-trans,octa-cis-undecaprenyl diphosphate + beta-D-GlcNAc-(1-&gt;4)-Mur2Ac(oyl-L-Ala-gamma-D-Glu-L-Lys-D-Ala-D-Ala)-di-trans,octa-cis-undecaprenyl diphosphate = [GlcNAc-(1-&gt;4)-Mur2Ac(oyl-L-Ala-gamma-D-Glu-L-Lys-D-Ala-D-Ala)](n+1)-di-trans,octa-cis-undecaprenyl diphosphate + di-trans,octa-cis-undecaprenyl diphosphate + H(+). It functions in the pathway cell wall biogenesis; peptidoglycan biosynthesis. Functionally, peptidoglycan polymerase that catalyzes glycan chain elongation using lipid-linked disaccharide-pentapeptide as the substrate. The polypeptide is Monofunctional glycosyltransferase (Staphylococcus haemolyticus (strain JCSC1435)).